The following is an 800-amino-acid chain: Fibroblast growth factor receptor 3 (800 aa).

The first 20 residues, 1-20 (MVPLCLLLYLATLVFPPVYS), serve as a signal peptide directing secretion. One can recognise an Ig-like C2-type 1 domain in the interval 21 to 122 (AHLLSPEPTD…YTVKVIDSLS (102 aa)). Residues 21 to 363 (AHLLSPEPTD…EMEREDDYAD (343 aa)) are Extracellular-facing. Cysteines 55 and 101 form a disulfide. N77, N90, and N112 each carry an N-linked (GlcNAc...) asparagine glycan. A compositionally biased stretch (acidic residues) spans 124-136 (GDDEDYDEDEDEA). Residues 124–143 (GDDEDYDEDEDEAGNGNAEA) are disordered. Ig-like C2-type domains follow at residues 144 to 237 (PYWT…YQLD) and 246 to 348 (PILQ…AWLT). The cysteines at positions 169 and 221 are disulfide-linked. Residues N218, N255, N287, N308, and N321 are each glycosylated (N-linked (GlcNAc...) asparagine). C268 and C332 are disulfide-bonded. Residues 364 to 384 (ILIYVTSCVLFILTMVIIILC) traverse the membrane as a helical segment. Residues 385-800 (RMWINTQKTL…HHHSNGVIRT (416 aa)) lie on the Cytoplasmic side of the membrane. Positions 460–739 (LTLGKPLGEG…RQLVEDHDRV (280 aa)) constitute a Protein kinase domain. Residues 466–474 (LGEGCFGQV) and K496 contribute to the ATP site. Catalysis depends on D605, which acts as the Proton acceptor. Phosphotyrosine; by autocatalysis is present on residues Y635, Y636, Y712, and Y748. Residues 764 to 773 (DSNSTCSSGD) show a composition bias toward polar residues. Residues 764-800 (DSNSTCSSGDDSVFAHDPLPEEPCLPKHHHSNGVIRT) are disordered.

The protein belongs to the protein kinase superfamily. Tyr protein kinase family. Fibroblast growth factor receptor subfamily. As to quaternary structure, monomer. Homodimer after ligand binding. Post-translationally, autophosphorylated. Binding of FGF family members together with heparan sulfate proteoglycan or heparin promotes receptor dimerization and autophosphorylation on tyrosine residues. Autophosphorylation occurs in trans between the two FGFR molecules present in the dimer.

The protein resides in the cell membrane. The catalysed reaction is L-tyrosyl-[protein] + ATP = O-phospho-L-tyrosyl-[protein] + ADP + H(+). With respect to regulation, present in an inactive conformation in the absence of bound ligand. Ligand binding leads to dimerization and activation by autophosphorylation on tyrosine residues. Tyrosine-protein kinase that acts as a cell-surface receptor for fibroblast growth factors and plays an essential role in the regulation of cell proliferation, differentiation and apoptosis. Plays an essential role in the regulation of chondrocyte differentiation, proliferation and apoptosis, and is required for normal skeleton development. Regulates both osteogenesis and postnatal bone mineralization by osteoblasts. Promotes apoptosis in chondrocytes, but can also promote cancer cell proliferation. Phosphorylates PLCG1, CBL and FRS2. Ligand binding leads to the activation of several signaling cascades. Activation of PLCG1 leads to the production of the cellular signaling molecules diacylglycerol and inositol 1,4,5-trisphosphate. Phosphorylation of FRS2 triggers recruitment of GRB2, GAB1, PIK3R1 and SOS1, and mediates activation of RAS, MAPK1/ERK2, MAPK3/ERK1 and the MAP kinase signaling pathway, as well as of the AKT1 signaling pathway. The polypeptide is Fibroblast growth factor receptor 3 (fgfr3) (Danio rerio (Zebrafish)).